The primary structure comprises 416 residues: E3 ubiquitin-protein ligase RNFT1 (416 aa).

Residues 27–45 (QSSSGHTHHQPGSNDSPSV) are compositionally biased toward polar residues. Disordered regions lie at residues 27 to 50 (QSSS…MSLP) and 63 to 116 (GDVT…ADSR). A compositionally biased stretch (basic residues) spans 77–86 (GARSSSRRVR). A run of 6 helical transmembrane segments spans residues 146-166 (LVVQ…TFLY), 184-204 (LQCL…YYTF), 214-234 (VFMN…VVGI), 237-257 (FIGK…PSFV), 265-287 (YWYM…PVWF), and 302-322 (WHFG…IIFG). Residues 349–400 (CSEVDGMCAICQAEFIKPIVLVCQHVFCEECISLWFNKEKTCPLCRTVISNQ) are required for ubiquitin ligase activity and for protection against ER stress-induced cell death. The RING-type zinc-finger motif lies at 356 to 394 (CAICQAEFIKPIVLVCQHVFCEECISLWFNKEKTCPLCR).

It is found in the endoplasmic reticulum membrane. It catalyses the reaction S-ubiquitinyl-[E2 ubiquitin-conjugating enzyme]-L-cysteine + [acceptor protein]-L-lysine = [E2 ubiquitin-conjugating enzyme]-L-cysteine + N(6)-ubiquitinyl-[acceptor protein]-L-lysine.. It participates in protein modification; protein ubiquitination. E3 ubiquitin-protein ligase that acts in the endoplasmic reticulum (ER)-associated degradation (ERAD) pathway, which targets misfolded proteins that accumulate in the endoplasmic reticulum (ER) for ubiquitination and subsequent proteasome-mediated degradation. Protects cells from ER stress-induced apoptosis. In Xenopus tropicalis (Western clawed frog), this protein is E3 ubiquitin-protein ligase RNFT1 (rnft1).